We begin with the raw amino-acid sequence, 276 residues long: tRNA dimethylallyltransferase (276 aa).

The interaction with substrate tRNA stretch occupies residues 9–12 (DSLS).

Belongs to the IPP transferase family. Monomer. Mg(2+) serves as cofactor.

The catalysed reaction is adenosine(37) in tRNA + dimethylallyl diphosphate = N(6)-dimethylallyladenosine(37) in tRNA + diphosphate. Its function is as follows. Catalyzes the transfer of a dimethylallyl group onto the adenine at position 37 in tRNAs that read codons beginning with uridine, leading to the formation of N6-(dimethylallyl)adenosine (i(6)A). The chain is tRNA dimethylallyltransferase (miaA) from Helicobacter pylori (strain Shi470).